The primary structure comprises 415 residues: DNA polymerase IV 2 (415 aa).

The UmuC domain occupies 7–183 (ILHADLDAFY…LPVSLMWGVG (177 aa)). Asp11 and Asp101 together coordinate Mg(2+). Glu102 is a catalytic residue.

It belongs to the DNA polymerase type-Y family. Monomer. Mg(2+) serves as cofactor.

The protein resides in the cytoplasm. The enzyme catalyses DNA(n) + a 2'-deoxyribonucleoside 5'-triphosphate = DNA(n+1) + diphosphate. Its function is as follows. Poorly processive, error-prone DNA polymerase involved in untargeted mutagenesis. Copies undamaged DNA at stalled replication forks, which arise in vivo from mismatched or misaligned primer ends. These misaligned primers can be extended by PolIV. Exhibits no 3'-5' exonuclease (proofreading) activity. May be involved in translesional synthesis, in conjunction with the beta clamp from PolIII. The protein is DNA polymerase IV 2 (dinB2) of Mesorhizobium japonicum (strain LMG 29417 / CECT 9101 / MAFF 303099) (Mesorhizobium loti (strain MAFF 303099)).